A 309-amino-acid chain; its full sequence is Methyltransferase AacuQ (309 aa).

The segment at 57 to 149 (DVGAGNGPYA…QLRPGGTFAC (93 aa)) is methyltransferase domain.

The protein belongs to the methyltransferase superfamily.

It functions in the pathway secondary metabolite biosynthesis. Its function is as follows. Methyltransferase; part of the gene cluster that mediates the biosynthesis of the tetrahydroxanthone dimer secalonic acid D. The pathway begins with the synthesis of atrochrysone thioester by the polyketide synthase AacuL. The atrochrysone carboxyl ACP thioesterase AacuM then breaks the thioester bond and releases the atrochrysone carboxylic acid from AacuL. Atrochrysone carboxylic acid is decarboxylated by the decarboxylase AacuI, and oxidized by the anthrone oxygenase AacuG to yield emodin. Emodin is then reduced to emodin hydroquinone by a yet unidentified oxidoreductase. A-ring reduction by the short chain dehydrogenase AacuN, dehydration by the scytalone dehydratase-like protein AacuK and probable spontaneous re-oxidation, results in overall deoxygenation to chrysophanol. Baeyer-Villiger oxidation by the Baeyer-Villiger monooxygenase (BVMO) AacuH then yields monodictyphenone. Monodictyphenone is transformed into compounds with the tetrahydroxanthone skeleton via methylesterification by the methyltransferase AacuQ, followed by the action of the flavin-dependent monooxygenase AacuC, the isomerase AacuP, and the short chain dehydrogenase/reductase AacuF or AacuD. AacuF and AacuD should accept the same compound as a substrate but perform the ketoreduction with a different stereoselectivity, thus yielding blennolides B and A, respectively. In the final step of the biosynthesis, the cytochrome P450 monooxygenase AacuE accepts blennolide B and/or blennolide A to conduct the dimerization reaction to furnish the tetrahydroxanthone dimers, secalonic acids D, B, and F. This is Methyltransferase AacuQ from Aspergillus aculeatus (strain ATCC 16872 / CBS 172.66 / WB 5094).